Reading from the N-terminus, the 453-residue chain is Tryptophan biosynthesis protein TrpCF (453 aa).

The indole-3-glycerol phosphate synthase stretch occupies residues 1-257 (MQDTTLKKII…TAVRSIIFGD (257 aa)). The tract at residues 258–453 (NKVCGLTRSI…KSIFQKLRYG (196 aa)) is N-(5'-phosphoribosyl)anthranilate isomerase.

The protein in the N-terminal section; belongs to the TrpC family. It in the C-terminal section; belongs to the TrpF family. In terms of assembly, monomer.

It carries out the reaction N-(5-phospho-beta-D-ribosyl)anthranilate = 1-(2-carboxyphenylamino)-1-deoxy-D-ribulose 5-phosphate. The catalysed reaction is 1-(2-carboxyphenylamino)-1-deoxy-D-ribulose 5-phosphate + H(+) = (1S,2R)-1-C-(indol-3-yl)glycerol 3-phosphate + CO2 + H2O. It participates in amino-acid biosynthesis; L-tryptophan biosynthesis; L-tryptophan from chorismate: step 3/5. It functions in the pathway amino-acid biosynthesis; L-tryptophan biosynthesis; L-tryptophan from chorismate: step 4/5. In terms of biological role, bifunctional enzyme that catalyzes two sequential steps of tryptophan biosynthetic pathway. The first reaction is catalyzed by the isomerase, coded by the TrpF domain; the second reaction is catalyzed by the synthase, coded by the TrpC domain. The polypeptide is Tryptophan biosynthesis protein TrpCF (trpC) (Buchnera aphidicola subsp. Acyrthosiphon pisum (strain APS) (Acyrthosiphon pisum symbiotic bacterium)).